Reading from the N-terminus, the 400-residue chain is Bifunctional arginine demethylase and lysyl-hydroxylase psr-1 (400 aa).

Residues 146-310 (RKTKKLSEDY…LVWPKTVKGR (165 aa)) enclose the JmjC domain. Residue Thr189 coordinates substrate. Fe cation-binding residues include His192 and Asp194. Asn202 contributes to the 2-oxoglutarate binding site. Residue Lys209 coordinates substrate. His278 is a Fe cation binding site. 2-oxoglutarate is bound at residue Thr290. Positions 342-400 (DMNESSSDSSSSSSSSDDSSDESDCDDSGRCGGRKRKNDDRSNECPEKMSTTYFQNSLV) are disordered. Over residues 346–358 (SSSDSSSSSSSSD) the composition is skewed to low complexity. Over residues 378 to 388 (KNDDRSNECPE) the composition is skewed to basic and acidic residues. Residues 390 to 400 (MSTTYFQNSLV) show a composition bias toward polar residues.

Belongs to the JMJD6 family. Interacts with ced-5 and ced-12. The cofactor is Fe(2+).

It localises to the nucleus. Its function is as follows. Dioxygenase that can both act as a histone arginine demethylase and a lysyl-hydroxylase. This is Bifunctional arginine demethylase and lysyl-hydroxylase psr-1 (psr-1) from Caenorhabditis elegans.